A 210-amino-acid chain; its full sequence is Large ribosomal subunit protein bL25 (210 aa).

Residues 191 to 200 (EAPAEGAAAP) show a composition bias toward low complexity. Residues 191–210 (EAPAEGAAAPAPAPAKKGKK) form a disordered region.

Belongs to the bacterial ribosomal protein bL25 family. CTC subfamily. In terms of assembly, part of the 50S ribosomal subunit; part of the 5S rRNA/L5/L18/L25 subcomplex. Contacts the 5S rRNA. Binds to the 5S rRNA independently of L5 and L18.

Its function is as follows. This is one of the proteins that binds to the 5S RNA in the ribosome where it forms part of the central protuberance. In Paracidovorax citrulli (strain AAC00-1) (Acidovorax citrulli), this protein is Large ribosomal subunit protein bL25.